The following is a 1101-amino-acid chain: Helicase POLQ-like (1101 aa).

A disordered region spans residues 212-261; sequence DLGDHSMKERDWKSSSHNTVNEELPHNCIEQPQQNDESSSKVRTSSDMNR. The segment covering 213–225 has biased composition (basic and acidic residues); it reads LGDHSMKERDWKS. Residues 241–258 show a composition bias toward polar residues; it reads EQPQQNDESSSKVRTSSD. Residues 346 to 518 form the Helicase ATP-binding domain; it reads LNSVQERKNL…FLQAEYYTSQ (173 aa). 359-366 lines the ATP pocket; sequence LPTSGGKT. The DEAH box signature appears at 463-466; that stretch reads DELH. One can recognise a Helicase C-terminal domain in the interval 566–758; it reads HLVALVTEVI…EFTKGIQTLF (193 aa).

Belongs to the helicase family. SKI2 subfamily. As to quaternary structure, homodimer. Interacts with POLN. Interacts with RAD51B and RAD51C; promoting association with the BCDX2 complex. Interacts with the replication protein A (RPA/RP-A) complex. Interacts with RAD51; stimulating HELQ DNA helicase activity and ability to unwing DNA.

The protein localises to the nucleus. It localises to the chromosome. The enzyme catalyses Couples ATP hydrolysis with the unwinding of duplex DNA by translocating in the 3'-5' direction.. It carries out the reaction ATP + H2O = ADP + phosphate + H(+). With respect to regulation, ATPase activity is strongly stimulated by single-stranded DNA. Presence of ATP and Mg cofactor are required for helicase activity allowing to unwind duplex oligonucleotides up to 60-70-mer. This helicase activity is stimulated by replication protein A (RPA/RP-A) complex that binds to unwound regions and inhibits re-annealing. Its function is as follows. Single-stranded 3'-5' DNA helicase that plays a key role in homology-driven double-strand break (DSB) repair. Involved in different DSB repair mechanisms that are guided by annealing of extensive stretches of complementary bases at break ends, such as microhomology-mediated end-joining (MMEJ), single-strand annealing (SSA) or synthesis-dependent strand annealing (SDSA). Possesses both DNA unwinding and annealing activities. Forms a complex with RAD51, stimulating HELQ DNA helicase activity and ability to unwing DNA. Efficiently unwinds substrates containing 3' overhangs or a D-loop. In contrast, interaction with the replication protein A (RPA/RP-A) complex inhibits DNA unwinding by HELQ but strongly stimulates DNA strand annealing. Triggers displacement of RPA from single-stranded DNA to facilitate annealing of complementary sequences. The polypeptide is Helicase POLQ-like (Homo sapiens (Human)).